The following is a 348-amino-acid chain: Phosphoribosylformylglycinamidine cyclo-ligase (348 aa).

It belongs to the AIR synthase family.

It is found in the cytoplasm. It carries out the reaction 2-formamido-N(1)-(5-O-phospho-beta-D-ribosyl)acetamidine + ATP = 5-amino-1-(5-phospho-beta-D-ribosyl)imidazole + ADP + phosphate + H(+). It participates in purine metabolism; IMP biosynthesis via de novo pathway; 5-amino-1-(5-phospho-D-ribosyl)imidazole from N(2)-formyl-N(1)-(5-phospho-D-ribosyl)glycinamide: step 2/2. The sequence is that of Phosphoribosylformylglycinamidine cyclo-ligase from Geotalea uraniireducens (strain Rf4) (Geobacter uraniireducens).